Reading from the N-terminus, the 203-residue chain is ATP-dependent Clp protease proteolytic subunit (203 aa).

The active-site Nucleophile is serine 107. Residue histidine 132 is part of the active site.

Belongs to the peptidase S14 family. Fourteen ClpP subunits assemble into 2 heptameric rings which stack back to back to give a disk-like structure with a central cavity, resembling the structure of eukaryotic proteasomes.

Its subcellular location is the cytoplasm. It catalyses the reaction Hydrolysis of proteins to small peptides in the presence of ATP and magnesium. alpha-casein is the usual test substrate. In the absence of ATP, only oligopeptides shorter than five residues are hydrolyzed (such as succinyl-Leu-Tyr-|-NHMec, and Leu-Tyr-Leu-|-Tyr-Trp, in which cleavage of the -Tyr-|-Leu- and -Tyr-|-Trp bonds also occurs).. Its function is as follows. Cleaves peptides in various proteins in a process that requires ATP hydrolysis. Has a chymotrypsin-like activity. Plays a major role in the degradation of misfolded proteins. In Shewanella frigidimarina (strain NCIMB 400), this protein is ATP-dependent Clp protease proteolytic subunit.